Reading from the N-terminus, the 310-residue chain is Aspartate carbamoyltransferase catalytic subunit (310 aa).

R58 and T59 together coordinate carbamoyl phosphate. Residue K86 participates in L-aspartate binding. Residues R108, H137, and Q140 each coordinate carbamoyl phosphate. Residues R170 and R225 each contribute to the L-aspartate site. Carbamoyl phosphate contacts are provided by G264 and P265.

Belongs to the aspartate/ornithine carbamoyltransferase superfamily. ATCase family. Heterododecamer (2C3:3R2) of six catalytic PyrB chains organized as two trimers (C3), and six regulatory PyrI chains organized as three dimers (R2).

The enzyme catalyses carbamoyl phosphate + L-aspartate = N-carbamoyl-L-aspartate + phosphate + H(+). Its pathway is pyrimidine metabolism; UMP biosynthesis via de novo pathway; (S)-dihydroorotate from bicarbonate: step 2/3. Functionally, catalyzes the condensation of carbamoyl phosphate and aspartate to form carbamoyl aspartate and inorganic phosphate, the committed step in the de novo pyrimidine nucleotide biosynthesis pathway. The polypeptide is Aspartate carbamoyltransferase catalytic subunit (Coxiella burnetii (strain CbuG_Q212) (Coxiella burnetii (strain Q212))).